The following is a 387-amino-acid chain: Chaperone protein DnaJ (387 aa).

One can recognise a J domain in the interval 5-70 (DYYEILEVSA…QKRQAYDQFG (66 aa)). Residues 130–208 (GTTVDVRIPT…CRGEGYKHSS (79 aa)) form a CR-type zinc finger. Zn(2+) is bound by residues Cys143, Cys146, Cys160, Cys163, Cys182, Cys185, Cys196, and Cys199. 4 CXXCXGXG motif repeats span residues 143 to 150 (CESCDGSG), 160 to 167 (CPTCQGIG), 182 to 189 (CPNCHGTG), and 196 to 203 (CKTCRGEG).

The protein belongs to the DnaJ family. In terms of assembly, homodimer. It depends on Zn(2+) as a cofactor.

It localises to the cytoplasm. Participates actively in the response to hyperosmotic and heat shock by preventing the aggregation of stress-denatured proteins and by disaggregating proteins, also in an autonomous, DnaK-independent fashion. Unfolded proteins bind initially to DnaJ; upon interaction with the DnaJ-bound protein, DnaK hydrolyzes its bound ATP, resulting in the formation of a stable complex. GrpE releases ADP from DnaK; ATP binding to DnaK triggers the release of the substrate protein, thus completing the reaction cycle. Several rounds of ATP-dependent interactions between DnaJ, DnaK and GrpE are required for fully efficient folding. Also involved, together with DnaK and GrpE, in the DNA replication of plasmids through activation of initiation proteins. This Hydrogenovibrio crunogenus (strain DSM 25203 / XCL-2) (Thiomicrospira crunogena) protein is Chaperone protein DnaJ.